Consider the following 109-residue polypeptide: Serine protease inhibitor (109 aa).

Positions 1–28 (MKMKLLQVHFVLLVSSSFLLGYTGMVTA) are cleaved as a signal peptide. 5 disulfide bridges follow: cysteine 43–cysteine 83, cysteine 52–cysteine 79, cysteine 58–cysteine 73, cysteine 62–cysteine 104, and cysteine 85–cysteine 98. The region spanning 43–104 (CRENEIFSQC…QGVCILENSC (62 aa)) is the TIL domain.

This sequence belongs to the serine protease inhibitor-like (TIL domain-containing) family. As to expression, ubiquitously expressed (at protein level), including in venom glands. Found more precisely in the epidermis, fat body, gut, muscle, and venom of worker bees.

The protein localises to the secreted. Dual role peptide that functions as a broad-spectrum antimicrobial peptide and antifibrinolytic toxin. Inhibits trypsin (IC(50)=375 nM), plasmin (IC(50)=2140 nM), and microbial serine proteases (subtilisin A (IC(50)=294 nM) and proteinase K (IC(50)=459 nM)). Exhibits antifibrinolytic activity by binding and inhibiting plasmin. Does not inhibit chymotrypsin, elastase or thrombin. Binds to microbial cell wall carbohydrates (LPS, mannan and N-acetyl-D-glucosamine) and shows antimicrobial activity (MIC=4.1 uM against B.thuringiensis, MIC=4.95 uM against E.coli, MIC=9.6 uM against the fungus B.bassiana). Does not show hemolytic activity. The polypeptide is Serine protease inhibitor (Bombus ignitus (Bumblebee)).